We begin with the raw amino-acid sequence, 67 residues long: Inosine/xanthosine triphosphatase (67 aa).

Belongs to the YjjX NTPase family. Homodimer. Mg(2+) is required as a cofactor. It depends on Mn(2+) as a cofactor.

The enzyme catalyses XTP + H2O = XDP + phosphate + H(+). It carries out the reaction ITP + H2O = IDP + phosphate + H(+). Phosphatase that hydrolyzes non-canonical purine nucleotides such as XTP and ITP to their respective diphosphate derivatives. Probably excludes non-canonical purines from DNA/RNA precursor pool, thus preventing their incorporation into DNA/RNA and avoiding chromosomal lesions. In Enterobacter cloacae, this protein is Inosine/xanthosine triphosphatase.